Here is a 445-residue protein sequence, read N- to C-terminus: Glycine--tRNA ligase (445 aa).

Residues Arg-97 and Glu-145 each contribute to the substrate site. ATP contacts are provided by residues 177 to 179 (RNE), 187 to 192 (FRTCEF), 262 to 263 (EV), and 308 to 311 (GLTR). 192–196 (FEQME) lines the substrate pocket. 304–308 (ETSAG) is a binding site for substrate.

It belongs to the class-II aminoacyl-tRNA synthetase family. In terms of assembly, homodimer.

Its subcellular location is the cytoplasm. The enzyme catalyses tRNA(Gly) + glycine + ATP = glycyl-tRNA(Gly) + AMP + diphosphate. Its function is as follows. Catalyzes the attachment of glycine to tRNA(Gly). The protein is Glycine--tRNA ligase of Borrelia garinii subsp. bavariensis (strain ATCC BAA-2496 / DSM 23469 / PBi) (Borreliella bavariensis).